A 117-amino-acid polypeptide reads, in one-letter code: Large ribosomal subunit protein uL18 (117 aa).

This sequence belongs to the universal ribosomal protein uL18 family. Part of the 50S ribosomal subunit; part of the 5S rRNA/L5/L18/L25 subcomplex. Contacts the 5S and 23S rRNAs.

Its function is as follows. This is one of the proteins that bind and probably mediate the attachment of the 5S RNA into the large ribosomal subunit, where it forms part of the central protuberance. This is Large ribosomal subunit protein uL18 from Blochmanniella floridana.